A 117-amino-acid chain; its full sequence is MATYSLANERLRALEDIEREIGAILQNAGTVILELSKEKTNERLLDRQAAAFTASVQHVEAELSAQIRYLTQVATGQPHEGSSYSSRKDCQMALKRLDYARLKLSEVARTCEQMLEN.

Ala-2 bears the N-acetylalanine mark.

Belongs to the Mediator complex subunit 11 family. As to quaternary structure, component of the Mediator complex, which is composed of MED1, MED4, MED6, MED7, MED8, MED9, MED10, MED11, MED12, MED13, MED13L, MED14, MED15, MED16, MED17, MED18, MED19, MED20, MED21, MED22, MED23, MED24, MED25, MED26, MED27, MED29, MED30, MED31, CCNC, CDK8 and CDC2L6/CDK11. The MED12, MED13, CCNC and CDK8 subunits form a distinct module termed the CDK8 module. Mediator containing the CDK8 module is less active than Mediator lacking this module in supporting transcriptional activation. Individual preparations of the Mediator complex lacking one or more distinct subunits have been variously termed ARC, CRSP, DRIP, PC2, SMCC and TRAP.

The protein resides in the nucleus. Functionally, component of the Mediator complex, a coactivator involved in the regulated transcription of nearly all RNA polymerase II-dependent genes. Mediator functions as a bridge to convey information from gene-specific regulatory proteins to the basal RNA polymerase II transcription machinery. Mediator is recruited to promoters by direct interactions with regulatory proteins and serves as a scaffold for the assembly of a functional pre-initiation complex with RNA polymerase II and the general transcription factors. In Bos taurus (Bovine), this protein is Mediator of RNA polymerase II transcription subunit 11 (MED11).